The sequence spans 432 residues: Homogentisate 1,2-dioxygenase (432 aa).

Residue histidine 286 is the Proton acceptor of the active site. The Fe cation site is built by histidine 329 and glutamate 335. 2 residues coordinate homogentisate: tyrosine 344 and histidine 365. Histidine 365 provides a ligand contact to Fe cation.

Belongs to the homogentisate dioxygenase family. Hexamer; dimer of trimers. Fe cation serves as cofactor.

It catalyses the reaction homogentisate + O2 = 4-maleylacetoacetate + H(+). The protein operates within amino-acid degradation; L-phenylalanine degradation; acetoacetate and fumarate from L-phenylalanine: step 4/6. Functionally, involved in the catabolism of homogentisate (2,5-dihydroxyphenylacetate or 2,5-OH-PhAc), a central intermediate in the degradation of phenylalanine and tyrosine. Catalyzes the oxidative ring cleavage of the aromatic ring of homogentisate to yield maleylacetoacetate. This chain is Homogentisate 1,2-dioxygenase, found in Bordetella petrii (strain ATCC BAA-461 / DSM 12804 / CCUG 43448).